A 551-amino-acid polypeptide reads, in one-letter code: Methyl-accepting chemotaxis protein I (551 aa).

The Cytoplasmic segment spans residues 1–6; it reads MLKRIK. Residues 7 to 30 form a helical membrane-spanning segment; it reads IVTSLLLVLAVFGLLQLTSGGLFF. The Periplasmic segment spans residues 31-190; that stretch reads NALKNDKENF…AVSDNNASYS (160 aa). Positions 64–73 are the 3 Arg may form a positively charged pocket, which binds the alpha-carboxyl group of the attractant AA; sequence RNTLNRAGIR. A helical membrane pass occupies residues 191-210; that stretch reads QAMWILVGVMIVVLAVIFAV. Over 211 to 551 the chain is Cytoplasmic; sequence WFGIKASLVA…ADSEENWETF (341 aa). Residues 216–268 enclose the HAMP domain; that stretch reads ASLVAPMNRLIDSIRHIAGGDLVKPIEVDGSNEMGQLAESLRHMQGELMRTVG. Residues 273–502 enclose the Methyl-accepting transducer domain; that stretch reads GANAIYSGAS…ESAAAAAALE (230 aa). Glutamine 297 carries the glutamate methyl ester (Gln) modification. Glutamate 304 carries the glutamate methyl ester (Glu) modification. A Glutamate methyl ester (Gln) modification is found at glutamine 311. 2 positions are modified to glutamate methyl ester (Glu): glutamate 493 and glutamate 502.

This sequence belongs to the methyl-accepting chemotaxis (MCP) protein family.

Its subcellular location is the cell inner membrane. Its function is as follows. Receptor for the attractant L-serine and related amino acids. Is also responsible for chemotaxis away from a wide range of repellents, including leucine, indole, and weak acids. Functionally, chemotactic-signal transducers respond to changes in the concentration of attractants and repellents in the environment, transduce a signal from the outside to the inside of the cell, and facilitate sensory adaptation through the variation of the level of methylation. Attractants increase the level of methylation while repellents decrease the level of methylation, the methyl groups are added by the methyltransferase CheR and removed by the methylesterase CheB. This chain is Methyl-accepting chemotaxis protein I (tsr), found in Escherichia coli (strain K12).